The following is a 496-amino-acid chain: Cobyric acid synthase (496 aa).

In terms of domain architecture, GATase cobBQ-type spans 250–437 (TLKVIAPALP…LHGLFESPQA (188 aa)). C331 acts as the Nucleophile in catalysis. H429 is a catalytic residue.

This sequence belongs to the CobB/CobQ family. CobQ subfamily.

It participates in cofactor biosynthesis; adenosylcobalamin biosynthesis. Catalyzes amidations at positions B, D, E, and G on adenosylcobyrinic A,C-diamide. NH(2) groups are provided by glutamine, and one molecule of ATP is hydrogenolyzed for each amidation. This is Cobyric acid synthase from Hahella chejuensis (strain KCTC 2396).